The sequence spans 81 residues: Sulfur carrier protein TusA (81 aa).

The Cysteine persulfide intermediate role is filled by C19.

Belongs to the sulfur carrier protein TusA family.

It localises to the cytoplasm. Functionally, sulfur carrier protein which probably makes part of a sulfur-relay system. The sequence is that of Sulfur carrier protein TusA from Shewanella sp. (strain ANA-3).